A 288-amino-acid chain; its full sequence is Pyridoxal kinase PdxY (288 aa).

Substrate is bound by residues Ser12 and 47–48 (TQ). ATP contacts are provided by residues Asp114, Glu151, Lys184, and 211–214 (RPLL). Asp225 contributes to the substrate binding site.

This sequence belongs to the pyridoxine kinase family. PdxY subfamily. Homodimer. Mg(2+) serves as cofactor.

It carries out the reaction pyridoxal + ATP = pyridoxal 5'-phosphate + ADP + H(+). Its pathway is cofactor metabolism; pyridoxal 5'-phosphate salvage; pyridoxal 5'-phosphate from pyridoxal: step 1/1. Pyridoxal kinase involved in the salvage pathway of pyridoxal 5'-phosphate (PLP). Catalyzes the phosphorylation of pyridoxal to PLP. This Pseudomonas syringae pv. syringae (strain B728a) protein is Pyridoxal kinase PdxY.